The sequence spans 326 residues: Zinc-dependent endopolyphosphatase (326 aa).

Topologically, residues 1–9 (MEDKRKRRA) are cytoplasmic. The helical transmembrane segment at 10–30 (ATLSTALILFVACCVYTLYIF) threads the bilayer. At 31-326 (KFDNPRLSPP…DYELIQVQCS (296 aa)) the chain is on the vacuolar side. N-linked (GlcNAc...) asparagine glycans are attached at residues asparagine 90 and asparagine 241.

This sequence belongs to the metallophosphoesterase superfamily. As to quaternary structure, interacts with PPN1. Zn(2+) is required as a cofactor. Requires Co(2+) as cofactor. Mg(2+) serves as cofactor.

Its subcellular location is the vacuole membrane. It carries out the reaction [phosphate](n+1) + n H2O = (n+1) phosphate + n H(+). Not sensitive to heparin inhibition. Catalyzes the hydrolysis of inorganic polyphosphate (polyP) chains of many hundreds of phosphate residues into shorter lengths. Exclusively shows endopolyphosphatase activity, cleaving inside the polyP chain. Together with PPN1, responsible for a substantial fraction of polyphosphatase activity that is necessary to mobilize polyP stores in response to phosphate scarcity. The polypeptide is Zinc-dependent endopolyphosphatase (Saccharomyces cerevisiae (strain ATCC 204508 / S288c) (Baker's yeast)).